A 157-amino-acid chain; its full sequence is Acetyltransferase PseH (157 aa).

The region spanning 5 to 152 is the N-acetyltransferase domain; it reads KNFTELNSQE…YHICLKQSDC (148 aa).

Functionally, catalyzes the third step in the biosynthesis of pseudaminic acid, a sialic-acid-like sugar that is used to modify flagellin. Mediates N-4 acetylation of UDP-4-amino-4,6-dideoxy-beta-L-AltNAc to form UDP-2,4-diacetamido-2,4,6-trideoxy-beta-L-altropyranose. The polypeptide is Acetyltransferase PseH (pseH) (Campylobacter jejuni subsp. jejuni serotype O:23/36 (strain 81-176)).